Here is a 438-residue protein sequence, read N- to C-terminus: Enolase (438 aa).

Residues H159 and E168 each contribute to the substrate site. E211 functions as the Proton donor in the catalytic mechanism. Residues D246, E297, and D322 each coordinate Mg(2+). Residues E297 and D322 each contribute to the substrate site. K347 functions as the Proton acceptor in the catalytic mechanism. Substrate-binding positions include 374–377 and K398; that span reads SHRS.

It belongs to the enolase family. In terms of assembly, homodimer. It depends on Mg(2+) as a cofactor.

The protein localises to the cytoplasm. It carries out the reaction (2R)-2-phosphoglycerate = phosphoenolpyruvate + H2O. Its pathway is carbohydrate degradation; glycolysis; pyruvate from D-glyceraldehyde 3-phosphate: step 4/5. Its function is as follows. Involved in osmoadaptation. The polypeptide is Enolase (enoA) (Emericella nidulans (strain FGSC A4 / ATCC 38163 / CBS 112.46 / NRRL 194 / M139) (Aspergillus nidulans)).